The following is a 275-amino-acid chain: Large ribosomal subunit protein uL2 (275 aa).

Disordered stretches follow at residues 24–54 (LYKG…VRHQ) and 223–275 (VAMN…RHKR). Basic and acidic residues-rich tracts occupy residues 25-38 (YKGR…EKKT) and 229-241 (DHPH…RTGE).

This sequence belongs to the universal ribosomal protein uL2 family. In terms of assembly, part of the 50S ribosomal subunit. Forms a bridge to the 30S subunit in the 70S ribosome.

Functionally, one of the primary rRNA binding proteins. Required for association of the 30S and 50S subunits to form the 70S ribosome, for tRNA binding and peptide bond formation. It has been suggested to have peptidyltransferase activity; this is somewhat controversial. Makes several contacts with the 16S rRNA in the 70S ribosome. This Azoarcus sp. (strain BH72) protein is Large ribosomal subunit protein uL2.